The chain runs to 128 residues: MNALGKHVIAEFYECDYETINNHELVEDIMLKSVDLSGATTIKSVFHRFSPYGVSGVVVVSESHFAIHTWPEYGYCAVDVFTCGDLIDNQAALDYLKEKFGSKNVSVVEMKRGVLNLGVDLHHKPVGN.

The active-site Schiff-base intermediate with substrate; via pyruvic acid is Ser-63. At Ser-63 the chain carries Pyruvic acid (Ser); by autocatalysis. His-68 functions as the Proton acceptor; for processing activity in the catalytic mechanism. Cys-83 serves as the catalytic Proton donor; for catalytic activity.

Belongs to the prokaryotic AdoMetDC family. Type 1 subfamily. In terms of assembly, heterotetramer of two alpha and two beta chains arranged as a dimer of alpha/beta heterodimers. Requires pyruvate as cofactor. In terms of processing, is synthesized initially as an inactive proenzyme. Formation of the active enzyme involves a self-maturation process in which the active site pyruvoyl group is generated from an internal serine residue via an autocatalytic post-translational modification. Two non-identical subunits are generated from the proenzyme in this reaction, and the pyruvate is formed at the N-terminus of the alpha chain, which is derived from the carboxyl end of the proenzyme. The post-translation cleavage follows an unusual pathway, termed non-hydrolytic serinolysis, in which the side chain hydroxyl group of the serine supplies its oxygen atom to form the C-terminus of the beta chain, while the remainder of the serine residue undergoes an oxidative deamination to produce ammonia and the pyruvoyl group blocking the N-terminus of the alpha chain.

The catalysed reaction is S-adenosyl-L-methionine + H(+) = S-adenosyl 3-(methylsulfanyl)propylamine + CO2. It functions in the pathway amine and polyamine biosynthesis; S-adenosylmethioninamine biosynthesis; S-adenosylmethioninamine from S-adenosyl-L-methionine: step 1/1. Functionally, catalyzes the decarboxylation of S-adenosylmethionine to S-adenosylmethioninamine (dcAdoMet), the propylamine donor required for the synthesis of the polyamines spermine and spermidine from the diamine putrescine. This is S-adenosylmethionine decarboxylase proenzyme from Leptospira borgpetersenii serovar Hardjo-bovis (strain JB197).